We begin with the raw amino-acid sequence, 254 residues long: Attacin-A (254 aa).

A signal peptide spans 1–18; sequence MFTYKLILGLVLVVSASA. Residues 19–62 constitute a propeptide that is removed on maturation; the sequence is RYLVFEDLEGESYLVPNQAEDEQVLEGEPFYENAVQLASPRVRR.

The protein belongs to the attacin/sarcotoxin-2 family.

It localises to the secreted. In terms of biological role, hemolymph antibacterial protein. The polypeptide is Attacin-A (Trichoplusia ni (Cabbage looper)).